An 827-amino-acid polypeptide reads, in one-letter code: Zinc phosphodiesterase ELAC protein 2 (827 aa).

The transit peptide at 1-16 directs the protein to the mitochondrion; sequence MWALRSLLRPLGLRTM. 2 disordered regions span residues 15–46 and 181–220; these read TMSQGSARRPRPPKDPLRHLRTREKRGPGWGP and SERRCGEQEPSRSPKRSPNRLSPKQSSSDPGSAENGQCLP. Positions 181-192 are enriched in basic and acidic residues; it reads SERRCGEQEPSR. A phosphoserine mark is found at serine 193, serine 197, serine 202, serine 207, serine 617, and serine 735. Positions 199 to 210 are enriched in polar residues; that stretch reads NRLSPKQSSSDP. Positions 794 to 827 are disordered; the sequence is LTQQADSSEDREPHQKRAHSEEPHSPQSKKVRAQ. Position 795 is a phosphothreonine (threonine 795). Serine 800 bears the Phosphoserine mark. The segment covering 801-817 has biased composition (basic and acidic residues); sequence SEDREPHQKRAHSEEPH. Serine 818 is subject to Phosphoserine.

Belongs to the RNase Z family. Homodimer. Interacts with PTCD1. Requires Zn(2+) as cofactor.

It is found in the mitochondrion. Its subcellular location is the mitochondrion matrix. It localises to the mitochondrion nucleoid. The protein localises to the nucleus. The enzyme catalyses Endonucleolytic cleavage of RNA, removing extra 3' nucleotides from tRNA precursor, generating 3' termini of tRNAs. A 3'-hydroxy group is left at the tRNA terminus and a 5'-phosphoryl group is left at the trailer molecule.. In terms of biological role, zinc phosphodiesterase, which displays mitochondrial tRNA 3'-processing endonuclease activity. Involved in tRNA maturation, by removing a 3'-trailer from precursor tRNA. Associates with mitochondrial DNA complexes at the nucleoids to initiate RNA processing and ribosome assembly. The chain is Zinc phosphodiesterase ELAC protein 2 (Elac2) from Rattus norvegicus (Rat).